A 184-amino-acid polypeptide reads, in one-letter code: Flavodoxin FldP (184 aa).

Positions 4–176 (AVVVYFSGYG…TVKLYAARVA (173 aa)) constitute a Flavodoxin-like domain. FMN-binding positions include 10–14 (SGYGH) and 91–147 (GFTN…SVGA).

Belongs to the FldP flavodoxin family. FMN is required as a cofactor.

Its function is as follows. Flavodoxins are low-potential electron donors to a number of redox enzymes. FldP protects the cell from oxidative stress and reactive oxygen species (ROS) damage, thereby expanding the capabilities of P.aeruginosa to thrive in hostile environments, and contributes to bacterial survival within the host. In vitro, is able to mediate ferredoxin-NADP(H) reductase (FNR)-driven cytochrome c reduction. The sequence is that of Flavodoxin FldP from Pseudomonas aeruginosa (strain UCBPP-PA14).